Consider the following 555-residue polypeptide: 1,3-beta-glucanosyltransferase GAS2 (555 aa).

The N-terminal stretch at Met-1–Gly-24 is a signal peptide. A disulfide bridge links Cys-89 with Cys-118. Residues Tyr-107, Ser-134–Arg-142, Asn-175, Glu-176, Asp-217, and Arg-222 contribute to the (1,3-beta-D-glucosyl)n site. The active-site Proton donor is the Glu-176. Intrachain disulfides connect Cys-231–Cys-367, Cys-247–Cys-278, Cys-390–Cys-442, Cys-392–Cys-489, Cys-399–Cys-466, and Cys-419–Cys-424. Glu-275 (nucleophile) is an active-site residue. A (1,3-beta-D-glucosyl)n-binding site is contributed by Tyr-307. Residue Asn-498 is glycosylated (N-linked (GlcNAc...) asparagine). Asp-531 is lipidated: GPI-anchor amidated aspartate. A propeptide spans Gly-532 to Leu-555 (removed in mature form).

It belongs to the glycosyl hydrolase 72 family. In terms of processing, N-glycosylated.

The protein resides in the cell membrane. Splits internally a 1,3-beta-glucan molecule and transfers the newly generated reducing end (the donor) to the non-reducing end of another 1,3-beta-glucan molecule (the acceptor) forming a 1,3-beta linkage, resulting in the elongation of 1,3-beta-glucan chains in the cell wall. Involved in spore wall assembly. This is 1,3-beta-glucanosyltransferase GAS2 (GAS2) from Saccharomyces cerevisiae (strain ATCC 204508 / S288c) (Baker's yeast).